Here is a 222-residue protein sequence, read N- to C-terminus: Matrix protein (222 aa).

Residues 46–49 carry the PTAP/PSAP motif motif; it reads PTAP.

In terms of assembly, homomultimer. Interacts with viral nucleocapsid. Interacts with host TSG101.

The protein localises to the virion membrane. Its subcellular location is the host endomembrane system. It localises to the host nucleus membrane. Plays a major role in assembly and budding of virion, by recruiting cellular partners of the ESCRT complexes that play a key role in releasing the budding particle from the host membrane. Condensates the ribonucleocapsid core during virus assembly. The protein is Matrix protein (M) of Drosophila melanogaster (Fruit fly).